Reading from the N-terminus, the 930-residue chain is Wings apart-like protein 1 (930 aa).

The interval 540–566 is disordered; it reads FSPTSMSGSQSSVSGNEPTTSKTRVGS. Over residues 541–553 the composition is skewed to low complexity; that stretch reads SPTSMSGSQSSVS. Residues 554-566 show a composition bias toward polar residues; it reads GNEPTTSKTRVGS. In terms of domain architecture, WAPL spans 854 to 909; the sequence is KEAEKMIVEAYSALLLAFLSTESRSIRNSIKDYLPKRNLAILVPVLERFVAFHMTL.

The protein belongs to the WAPL family. Interacts with the cohesin complex throughout the cell cycle. In terms of tissue distribution, expressed in roots, leaves, buds and siliques.

It localises to the nucleus. The protein resides in the chromosome. Regulator of sister chromatid cohesion in meiosis which negatively regulates cohesin association with chromatin, acting as an antagonist of CTF7. Cohesion ensures that chromosome partitioning is accurate in both meiotic and mitotic cells and plays an important role in DNA repair. Essential for the prophase removal of cohesin during meiosis thus determining the timely release of meiotic cohesion. Important for proper spindle attachment and assembly during meiosis. Helps to prevent abnormal centromere association during prophase I in meiocytes. Required for early embryonic patterning. Also involved in chromosome segregation during mitosis. This is Wings apart-like protein 1 from Arabidopsis thaliana (Mouse-ear cress).